A 653-amino-acid chain; its full sequence is Threonine--tRNA ligase (653 aa).

Residues 1-61 (MIKITFPDGN…NEDAEVKLFK (61 aa)) enclose the TGS domain. The interval 243 to 542 (DHRKIGKELE…LIEHTAGKFP (300 aa)) is catalytic. Positions 338, 389, and 519 each coordinate Zn(2+).

Belongs to the class-II aminoacyl-tRNA synthetase family. Homodimer. Requires Zn(2+) as cofactor.

The protein localises to the cytoplasm. The enzyme catalyses tRNA(Thr) + L-threonine + ATP = L-threonyl-tRNA(Thr) + AMP + diphosphate + H(+). Its function is as follows. Catalyzes the attachment of threonine to tRNA(Thr) in a two-step reaction: L-threonine is first activated by ATP to form Thr-AMP and then transferred to the acceptor end of tRNA(Thr). Also edits incorrectly charged L-seryl-tRNA(Thr). This chain is Threonine--tRNA ligase, found in Porphyromonas gingivalis (strain ATCC 33277 / DSM 20709 / CIP 103683 / JCM 12257 / NCTC 11834 / 2561).